The chain runs to 141 residues: GTP cyclohydrolase-2 (141 aa).

Position 1-3 (1-3 (HSE)) interacts with GTP. Zn(2+) is bound by residues Cys-4, Cys-15, and Cys-17. GTP is bound by residues Gln-20, 41 to 43 (EGR), and Thr-63. Asp-75 (proton acceptor) is an active-site residue. The Nucleophile role is filled by Arg-77. GTP is bound by residues Thr-98 and Lys-103.

The protein belongs to the GTP cyclohydrolase II family. The cofactor is Zn(2+).

It carries out the reaction GTP + 4 H2O = 2,5-diamino-6-hydroxy-4-(5-phosphoribosylamino)-pyrimidine + formate + 2 phosphate + 3 H(+). It participates in cofactor biosynthesis; riboflavin biosynthesis; 5-amino-6-(D-ribitylamino)uracil from GTP: step 1/4. Its function is as follows. Catalyzes the conversion of GTP to 2,5-diamino-6-ribosylamino-4(3H)-pyrimidinone 5'-phosphate (DARP), formate and pyrophosphate. The protein is GTP cyclohydrolase-2 (ribA) of Sulfurospirillum multivorans (Dehalospirillum multivorans).